Here is a 248-residue protein sequence, read N- to C-terminus: Probable pyridoxal 5'-phosphate synthase subunit pdx2 (248 aa).

70–72 (GES) provides a ligand contact to L-glutamine. Cys106 serves as the catalytic Nucleophile. L-glutamine-binding positions include Arg136 and 174–175 (IR). Catalysis depends on charge relay system residues His221 and Glu223.

This sequence belongs to the glutaminase PdxT/SNO family.

The catalysed reaction is aldehydo-D-ribose 5-phosphate + D-glyceraldehyde 3-phosphate + L-glutamine = pyridoxal 5'-phosphate + L-glutamate + phosphate + 3 H2O + H(+). The enzyme catalyses L-glutamine + H2O = L-glutamate + NH4(+). It functions in the pathway cofactor biosynthesis; pyridoxal 5'-phosphate biosynthesis. Catalyzes the hydrolysis of glutamine to glutamate and ammonia as part of the biosynthesis of pyridoxal 5'-phosphate. The resulting ammonia molecule is channeled to the active site of pdx1. This is Probable pyridoxal 5'-phosphate synthase subunit pdx2 from Dictyostelium discoideum (Social amoeba).